Consider the following 185-residue polypeptide: Potassium-transporting ATPase KdpC subunit (185 aa).

A helical transmembrane segment spans residues 11 to 31 (LALLMTLVTGALYPLAVTGIA).

This sequence belongs to the KdpC family. The system is composed of three essential subunits: KdpA, KdpB and KdpC.

The protein localises to the cell inner membrane. Functionally, part of the high-affinity ATP-driven potassium transport (or Kdp) system, which catalyzes the hydrolysis of ATP coupled with the electrogenic transport of potassium into the cytoplasm. This subunit acts as a catalytic chaperone that increases the ATP-binding affinity of the ATP-hydrolyzing subunit KdpB by the formation of a transient KdpB/KdpC/ATP ternary complex. This is Potassium-transporting ATPase KdpC subunit from Pseudomonas putida (strain ATCC 47054 / DSM 6125 / CFBP 8728 / NCIMB 11950 / KT2440).